We begin with the raw amino-acid sequence, 589 residues long: Transmembrane 9 superfamily member 5 (589 aa).

An N-terminal signal peptide occupies residues 1–24 (MAQFLLTVLQVLLALTFWIGIGSG). Topologically, residues 25-227 (SSNHYNAGDH…SFHPISQKIH (203 aa)) are lumenal. The helical transmembrane segment at 228 to 248 (FFSFLNSITVVVLLIGLISFL) threads the bilayer. Topologically, residues 249 to 291 (FMRHLKNELRSYSIGDEEERKEAGWKLVHSDVFRCPRNISWLC) are cytoplasmic. The chain crosses the membrane as a helical span at residues 292–312 (AILGTGTQLLILIIALFALAF). The Lumenal portion of the chain corresponds to 313 to 321 (TGFLYPYNR). A helical membrane pass occupies residues 322 to 342 (GMLLTSLVIMYTLTSIVAGYT). Over 343 to 361 (STSFHSQFEGNKQKRSVRL) the chain is Cytoplasmic. The helical transmembrane segment at 362-382 (AGILYPVPFFIILSVLNTVAI) threads the bilayer. At 383–394 (TYGATAALPFGT) the chain is on the lumenal side. A helical membrane pass occupies residues 395 to 415 (IVIIILIFTLLNIPFLMLGGV). Topologically, residues 416–450 (LGNRFGLLEFQPPSAVKRNPREIPPQNWYRRKLYQ) are cytoplasmic. A helical transmembrane segment spans residues 451–471 (VFLGGFVPFSAVVLEWHQLYA). Residues 472–482 (SLWGFKIYTSP) lie on the Lumenal side of the membrane. The chain crosses the membrane as a helical span at residues 483 to 503 (GIMLFTFIVLIFLSSSVGIIL). Over 504-518 (TYIQLSGEDHEWWWR) the chain is Cytoplasmic. A helical membrane pass occupies residues 519-539 (SILCGGFTAVFMYGYGVLFYL). The Lumenal portion of the chain corresponds to 540–550 (RSDMTGFLQLS). The chain crosses the membrane as a helical span at residues 551–571 (FYLGYTALLCYALFLVLGTIS). At 572-589 (FLASLMFIRHIYRSVKLE) the chain is on the cytoplasmic side. Residues 578-583 (FIRHIY) carry the Endoplasmic reticulum export signal motif. A Golgi retention signal motif is present at residues 587–589 (KLE).

The protein belongs to the nonaspanin (TM9SF) (TC 9.A.2) family. In terms of tissue distribution, expressed in the root cap and in giant cells.

The protein resides in the endosome membrane. The protein localises to the golgi apparatus membrane. This is Transmembrane 9 superfamily member 5 from Arabidopsis thaliana (Mouse-ear cress).